Here is a 355-residue protein sequence, read N- to C-terminus: Protein-glutamate methylesterase/protein-glutamine glutaminase (355 aa).

A Response regulatory domain is found at 4 to 121 (KVLIIDDSAL…ANGMHEYSEM (118 aa)). Aspartate 55 carries the post-translational modification 4-aspartylphosphate. Residues 156–348 (LISSEKLIII…GRVLQYLAAN (193 aa)) form the CheB-type methylesterase domain. Active-site residues include serine 168, histidine 194, and aspartate 290.

This sequence belongs to the CheB family. In terms of processing, phosphorylated by CheA. Phosphorylation of the N-terminal regulatory domain activates the methylesterase activity.

It localises to the cytoplasm. The enzyme catalyses [protein]-L-glutamate 5-O-methyl ester + H2O = L-glutamyl-[protein] + methanol + H(+). It carries out the reaction L-glutaminyl-[protein] + H2O = L-glutamyl-[protein] + NH4(+). Involved in chemotaxis. Part of a chemotaxis signal transduction system that modulates chemotaxis in response to various stimuli. Catalyzes the demethylation of specific methylglutamate residues introduced into the chemoreceptors (methyl-accepting chemotaxis proteins or MCP) by CheR. Also mediates the irreversible deamidation of specific glutamine residues to glutamic acid. The protein is Protein-glutamate methylesterase/protein-glutamine glutaminase of Methylobacillus flagellatus (strain ATCC 51484 / DSM 6875 / VKM B-1610 / KT).